The chain runs to 576 residues: Glutamine-dependent NAD(+) synthetase (576 aa).

Residues 4-246 enclose the CN hydrolase domain; sequence LRVTLAQLNP…EEIITVDLDL (243 aa). Residue glutamate 44 is the Proton acceptor; for glutaminase activity of the active site. Lysine 112 acts as the For glutaminase activity in catalysis. An L-glutamine-binding site is contributed by tyrosine 118. The Nucleophile; for glutaminase activity role is filled by cysteine 148. L-glutamine is bound by residues serine 176 and lysine 182. The ligase stretch occupies residues 292-576; sequence PVREEEMFRA…PITNRFKEPL (285 aa). 321–328 is an ATP binding site; that stretch reads GLSGGMDS. Asparagine 404 is a binding site for deamido-NAD(+). Threonine 428 serves as a coordination point for ATP. Glutamate 433 and lysine 545 together coordinate deamido-NAD(+).

In the C-terminal section; belongs to the NAD synthetase family.

The catalysed reaction is deamido-NAD(+) + L-glutamine + ATP + H2O = L-glutamate + AMP + diphosphate + NAD(+) + H(+). It participates in cofactor biosynthesis; NAD(+) biosynthesis; NAD(+) from deamido-NAD(+) (L-Gln route): step 1/1. In terms of biological role, catalyzes the ATP-dependent amidation of deamido-NAD to form NAD. Uses L-glutamine as a nitrogen source. This is Glutamine-dependent NAD(+) synthetase (nadE2) from Thermotoga maritima (strain ATCC 43589 / DSM 3109 / JCM 10099 / NBRC 100826 / MSB8).